Here is an 80-residue protein sequence, read N- to C-terminus: Large ribosomal subunit protein uL24 (80 aa).

Belongs to the universal ribosomal protein uL24 family. As to quaternary structure, part of the 50S ribosomal subunit.

Its function is as follows. One of two assembly initiator proteins, it binds directly to the 5'-end of the 23S rRNA, where it nucleates assembly of the 50S subunit. Functionally, one of the proteins that surrounds the polypeptide exit tunnel on the outside of the subunit. In Chlorobaculum parvum (strain DSM 263 / NCIMB 8327) (Chlorobium vibrioforme subsp. thiosulfatophilum), this protein is Large ribosomal subunit protein uL24.